The following is a 62-amino-acid chain: uncharacterized protein (62 aa).

The chain crosses the membrane as a helical span at residues 17 to 37; it reads IVFFLGLVVVLLMMINLYMLI.

It is found in the membrane. This is an uncharacterized protein from Helicobacter pylori (strain J99 / ATCC 700824) (Campylobacter pylori J99).